A 280-amino-acid chain; its full sequence is Pantothenate synthetase (280 aa).

26-33 (MGNLHEGH) contributes to the ATP binding site. The active-site Proton donor is histidine 33. Glutamine 57 contacts (R)-pantoate. Glutamine 57 contacts beta-alanine. An ATP-binding site is contributed by 145–148 (GKKD). Position 151 (glutamine 151) interacts with (R)-pantoate. ATP contacts are provided by residues valine 174 and 182 to 185 (LSSR).

This sequence belongs to the pantothenate synthetase family. As to quaternary structure, homodimer.

The protein resides in the cytoplasm. The enzyme catalyses (R)-pantoate + beta-alanine + ATP = (R)-pantothenate + AMP + diphosphate + H(+). It functions in the pathway cofactor biosynthesis; (R)-pantothenate biosynthesis; (R)-pantothenate from (R)-pantoate and beta-alanine: step 1/1. Functionally, catalyzes the condensation of pantoate with beta-alanine in an ATP-dependent reaction via a pantoyl-adenylate intermediate. This is Pantothenate synthetase from Bordetella bronchiseptica (strain ATCC BAA-588 / NCTC 13252 / RB50) (Alcaligenes bronchisepticus).